The following is a 205-amino-acid chain: MSKRESAKYKIDRRLGENIWGRPKSPVNRREYGPGQHGQRRKGKLSDFGVQLRAKQKLKGFYGDISEKQFRKTYEEAARRKGDTGENLIGLLESRLDAVVYRAKFVPTIFAARQFINHGHVNVNGRRVNVQSYRLKTGDVVEVREKSKQLVIVLEAVQLAERDVPDYIEVDHNKLVATYSRVPTLTDVPYAVQMEPNLVVEFYSR.

Positions 19 to 45 (IWGRPKSPVNRREYGPGQHGQRRKGKL) are disordered. Positions 94 to 157 (SRLDAVVYRA…KQLVIVLEAV (64 aa)) constitute an S4 RNA-binding domain.

It belongs to the universal ribosomal protein uS4 family. As to quaternary structure, part of the 30S ribosomal subunit. Contacts protein S5. The interaction surface between S4 and S5 is involved in control of translational fidelity.

One of the primary rRNA binding proteins, it binds directly to 16S rRNA where it nucleates assembly of the body of the 30S subunit. In terms of biological role, with S5 and S12 plays an important role in translational accuracy. In Brucella anthropi (strain ATCC 49188 / DSM 6882 / CCUG 24695 / JCM 21032 / LMG 3331 / NBRC 15819 / NCTC 12168 / Alc 37) (Ochrobactrum anthropi), this protein is Small ribosomal subunit protein uS4.